The sequence spans 126 residues: RxLR effector protein BLR31 (126 aa).

Residues 1 to 22 (MLLSRAISVLALLACIRCGVHA) form the signal peptide. The short motif at 44–58 (RLLRTSVDFKDSEER) is the RxLR-dEER element.

It belongs to the RxLR effector family.

The protein resides in the secreted. It is found in the host cell. Its function is as follows. Secreted effector that triggers a hypersensitive response (HR) in 3 Lactuca saligna accessions (CGN05947, CGN05310, CGN05304). In Bremia lactucae (Lettuce downy mildew), this protein is RxLR effector protein BLR31.